Here is a 262-residue protein sequence, read N- to C-terminus: Putative hydro-lyase BLi00500/BL02808 (262 aa).

Belongs to the D-glutamate cyclase family.

In Bacillus licheniformis (strain ATCC 14580 / DSM 13 / JCM 2505 / CCUG 7422 / NBRC 12200 / NCIMB 9375 / NCTC 10341 / NRRL NRS-1264 / Gibson 46), this protein is Putative hydro-lyase BLi00500/BL02808.